The sequence spans 515 residues: ATP synthase subunit alpha (515 aa).

Position 169–176 (169–176 (GDRQTGKT)) interacts with ATP.

This sequence belongs to the ATPase alpha/beta chains family. F-type ATPases have 2 components, CF(1) - the catalytic core - and CF(0) - the membrane proton channel. CF(1) has five subunits: alpha(3), beta(3), gamma(1), delta(1), epsilon(1). CF(0) has three main subunits: a(1), b(2) and c(9-12). The alpha and beta chains form an alternating ring which encloses part of the gamma chain. CF(1) is attached to CF(0) by a central stalk formed by the gamma and epsilon chains, while a peripheral stalk is formed by the delta and b chains.

The protein resides in the cell inner membrane. The catalysed reaction is ATP + H2O + 4 H(+)(in) = ADP + phosphate + 5 H(+)(out). Functionally, produces ATP from ADP in the presence of a proton gradient across the membrane. The alpha chain is a regulatory subunit. This is ATP synthase subunit alpha from Neisseria gonorrhoeae (strain ATCC 700825 / FA 1090).